Reading from the N-terminus, the 177-residue chain is O-acetyl-ADP-ribose deacetylase (177 aa).

The region spanning 1-175 (MKSRIHVQHG…LYERLLTQQG (175 aa)) is the Macro domain. Substrate-binding positions include 11 to 12 (DI), N25, 33 to 35 (GVD), and 122 to 126 (STGAY). D35 functions as the Proton acceptor in the catalytic mechanism.

This sequence belongs to the MacroD-type family. YmdB subfamily. As to quaternary structure, homodimer. Interacts with RNase III.

The enzyme catalyses 3''-O-acetyl-ADP-D-ribose + H2O = ADP-D-ribose + acetate + H(+). It catalyses the reaction 2''-O-acetyl-ADP-D-ribose + H2O = ADP-D-ribose + acetate + H(+). In terms of biological role, deacetylates O-acetyl-ADP ribose to yield ADP-ribose and free acetate. Down-regulates ribonuclease 3 (RNase III) activity. Acts by interacting directly with the region of the ribonuclease that is required for dimerization/activation. This Citrobacter koseri (strain ATCC BAA-895 / CDC 4225-83 / SGSC4696) protein is O-acetyl-ADP-ribose deacetylase.